The chain runs to 115 residues: Nitrogen regulatory protein P-II 2 (115 aa).

Y54 carries the post-translational modification O-UMP-tyrosine.

Belongs to the P(II) protein family.

Could be involved in the regulation of nitrogen fixation. The polypeptide is Nitrogen regulatory protein P-II 2 (Methanothermobacter thermautotrophicus (strain ATCC 29096 / DSM 1053 / JCM 10044 / NBRC 100330 / Delta H) (Methanobacterium thermoautotrophicum)).